Here is a 137-residue protein sequence, read N- to C-terminus: Nucleoside diphosphate kinase (137 aa).

Lysine 10, phenylalanine 58, arginine 86, threonine 92, arginine 103, and asparagine 113 together coordinate ATP. Histidine 116 serves as the catalytic Pros-phosphohistidine intermediate.

This sequence belongs to the NDK family. Homotetramer. The cofactor is Mg(2+).

It localises to the cytoplasm. It catalyses the reaction a 2'-deoxyribonucleoside 5'-diphosphate + ATP = a 2'-deoxyribonucleoside 5'-triphosphate + ADP. The enzyme catalyses a ribonucleoside 5'-diphosphate + ATP = a ribonucleoside 5'-triphosphate + ADP. Major role in the synthesis of nucleoside triphosphates other than ATP. The ATP gamma phosphate is transferred to the NDP beta phosphate via a ping-pong mechanism, using a phosphorylated active-site intermediate. The protein is Nucleoside diphosphate kinase of Helicobacter pylori (strain G27).